A 255-amino-acid polypeptide reads, in one-letter code: MSKEFLPTILKQKEQEVAAMSYEELQPLRSTYSLYEYLKNHPQELQLIAEVKKASPSLGDINLGVDIVEQARTYERCGAAMISVLTDEIFFKGHLDYLREISSQVTIPTLNKDFIIDEKQIVRARNAGATVILLIVAALSEKRLQELYDFATGLGLEVLVETHNLAELETAHRIGAQIIGVNNRNLVTFETDINTSLQLSAHFKDDRVYVSESAIFSKEDAELVAPYFHAVLVGTALMQAENVAEKIKELKIDKG.

Belongs to the TrpC family.

The enzyme catalyses 1-(2-carboxyphenylamino)-1-deoxy-D-ribulose 5-phosphate + H(+) = (1S,2R)-1-C-(indol-3-yl)glycerol 3-phosphate + CO2 + H2O. It functions in the pathway amino-acid biosynthesis; L-tryptophan biosynthesis; L-tryptophan from chorismate: step 4/5. The protein is Indole-3-glycerol phosphate synthase of Streptococcus sanguinis (strain SK36).